A 186-amino-acid chain; its full sequence is Ribosome-recycling factor (186 aa).

Belongs to the RRF family.

It localises to the cytoplasm. Functionally, responsible for the release of ribosomes from messenger RNA at the termination of protein biosynthesis. May increase the efficiency of translation by recycling ribosomes from one round of translation to another. This is Ribosome-recycling factor from Rhizobium leguminosarum bv. trifolii (strain WSM2304).